The chain runs to 122 residues: Small ribosomal subunit protein uS13 (122 aa).

Residues 94-122 (KKLPVRGQRTHTNARTRKGPAKPIAGKKK) are disordered.

This sequence belongs to the universal ribosomal protein uS13 family. As to quaternary structure, part of the 30S ribosomal subunit. Forms a loose heterodimer with protein S19. Forms two bridges to the 50S subunit in the 70S ribosome.

Located at the top of the head of the 30S subunit, it contacts several helices of the 16S rRNA. In the 70S ribosome it contacts the 23S rRNA (bridge B1a) and protein L5 of the 50S subunit (bridge B1b), connecting the 2 subunits; these bridges are implicated in subunit movement. Contacts the tRNAs in the A and P-sites. This Hyphomonas neptunium (strain ATCC 15444) protein is Small ribosomal subunit protein uS13.